The sequence spans 619 residues: Chaperone protein HscA homolog (619 aa).

Belongs to the heat shock protein 70 family.

Its function is as follows. Chaperone involved in the maturation of iron-sulfur cluster-containing proteins. Has a low intrinsic ATPase activity which is markedly stimulated by HscB. The chain is Chaperone protein HscA homolog from Acinetobacter baumannii (strain ATCC 17978 / DSM 105126 / CIP 53.77 / LMG 1025 / NCDC KC755 / 5377).